The sequence spans 257 residues: Acyl-[acyl-carrier-protein]--UDP-N-acetylglucosamine O-acyltransferase (257 aa).

This sequence belongs to the transferase hexapeptide repeat family. LpxA subfamily. In terms of assembly, homotrimer.

Its subcellular location is the cytoplasm. The enzyme catalyses a (3R)-hydroxyacyl-[ACP] + UDP-N-acetyl-alpha-D-glucosamine = a UDP-3-O-[(3R)-3-hydroxyacyl]-N-acetyl-alpha-D-glucosamine + holo-[ACP]. It functions in the pathway glycolipid biosynthesis; lipid IV(A) biosynthesis; lipid IV(A) from (3R)-3-hydroxytetradecanoyl-[acyl-carrier-protein] and UDP-N-acetyl-alpha-D-glucosamine: step 1/6. Its function is as follows. Involved in the biosynthesis of lipid A, a phosphorylated glycolipid that anchors the lipopolysaccharide to the outer membrane of the cell. In Fusobacterium nucleatum subsp. nucleatum (strain ATCC 25586 / DSM 15643 / BCRC 10681 / CIP 101130 / JCM 8532 / KCTC 2640 / LMG 13131 / VPI 4355), this protein is Acyl-[acyl-carrier-protein]--UDP-N-acetylglucosamine O-acyltransferase.